The primary structure comprises 275 residues: Elongation factor Ts (275 aa).

Residues 76–79 form an involved in Mg(2+) ion dislocation from EF-Tu region; the sequence is TDFV.

The protein belongs to the EF-Ts family.

It localises to the cytoplasm. In terms of biological role, associates with the EF-Tu.GDP complex and induces the exchange of GDP to GTP. It remains bound to the aminoacyl-tRNA.EF-Tu.GTP complex up to the GTP hydrolysis stage on the ribosome. The chain is Elongation factor Ts from Rhodococcus opacus (strain B4).